We begin with the raw amino-acid sequence, 520 residues long: MFCTRGLLFFAFLAGLDIEFTGLRSNLSGPQQISLFDLPSEWYLKTRQSVQQFTVCQIGLSVFSAIEGEANKYIAHSCNFYLFPTTFGILDSEFSFQASSVQFLNQYGFNYNKFLKNGIPYMNEEQEKKIRHDILTGNWRVRSSPDKDQIKVVIDEVTRWLELAKEGDWMTLPGITGFQAFEVQLVLRQALPNIWTVLKDEGVVVKKVSKQHRWYLQNTSCDRESCWKENILLSARGFSVFFQMLVKAQKPLVGHNMMMDLLHLHEKFFRPLPESYDQFKQNIHSLFPVLIDTKSVTKDIWKEMNFPRVSNLSEVYEVLNSDLNPTKNSGPEIVHASRCEKYVETKCPHEAAYDAFLCGSVLLKVAHLLLQKIYHIDPVPESSFPQYLDVLAPYVNQVNLIRAGVPKINFSGPDYPSIRPPILILSVKRWPGVSEQQVYHKFQNLCKFDVRRLTRSQFLLLTNKFKDARNILKEYRDHPTLCISLYRYWRHSPNVNCLLQVCGIVTAWALLAFILGRSGT.

Mg(2+) is bound by residues aspartate 17, glutamate 19, aspartate 260, and aspartate 354. A helical membrane pass occupies residues valine 495–leucine 515.

The protein belongs to the CAF1 family. It depends on Mg(2+) as a cofactor.

The protein resides in the endoplasmic reticulum membrane. It catalyses the reaction Exonucleolytic cleavage of poly(A) to 5'-AMP.. 3'-exoribonuclease that has a preference for poly(A) tails of mRNAs, thereby efficiently degrading poly(A) tails. Exonucleolytic degradation of the poly(A) tail is often the first step in the decay of eukaryotic mRNAs and is also used to silence certain maternal mRNAs translationally during oocyte maturation and early embryonic development. May act as a regulator of multipotency in embryonic stem cells. Is a critical factor for proper spermatogenesis, involved in pre-piRNAs processing to generate mature piRNAs. This is Poly(A)-specific ribonuclease PNLDC1 from Homo sapiens (Human).